A 394-amino-acid chain; its full sequence is Succinate--CoA ligase [ADP-forming] subunit beta (394 aa).

Residues Lys-46, 53–55 (GRG), Glu-99, Cys-102, and Glu-107 each bind ATP. Residues Asn-199 and Asp-213 each coordinate Mg(2+). Residues Asn-264 and 321–323 (GIV) contribute to the substrate site.

Belongs to the succinate/malate CoA ligase beta subunit family. As to quaternary structure, heterotetramer of two alpha and two beta subunits. Mg(2+) is required as a cofactor.

It catalyses the reaction succinate + ATP + CoA = succinyl-CoA + ADP + phosphate. It carries out the reaction GTP + succinate + CoA = succinyl-CoA + GDP + phosphate. Its pathway is carbohydrate metabolism; tricarboxylic acid cycle; succinate from succinyl-CoA (ligase route): step 1/1. Succinyl-CoA synthetase functions in the citric acid cycle (TCA), coupling the hydrolysis of succinyl-CoA to the synthesis of either ATP or GTP and thus represents the only step of substrate-level phosphorylation in the TCA. The beta subunit provides nucleotide specificity of the enzyme and binds the substrate succinate, while the binding sites for coenzyme A and phosphate are found in the alpha subunit. The sequence is that of Succinate--CoA ligase [ADP-forming] subunit beta from Haemophilus influenzae (strain PittGG).